We begin with the raw amino-acid sequence, 346 residues long: Phosphoribosylformylglycinamidine cyclo-ligase (346 aa).

It belongs to the AIR synthase family.

It is found in the cytoplasm. The enzyme catalyses 2-formamido-N(1)-(5-O-phospho-beta-D-ribosyl)acetamidine + ATP = 5-amino-1-(5-phospho-beta-D-ribosyl)imidazole + ADP + phosphate + H(+). The protein operates within purine metabolism; IMP biosynthesis via de novo pathway; 5-amino-1-(5-phospho-D-ribosyl)imidazole from N(2)-formyl-N(1)-(5-phospho-D-ribosyl)glycinamide: step 2/2. This Geobacillus kaustophilus (strain HTA426) protein is Phosphoribosylformylglycinamidine cyclo-ligase.